The primary structure comprises 514 residues: Phospholipase C D (514 aa).

Residues 1–37 (MSQSHIGGVSRREFLAKVAAGGAGALMSFAGPVIEKA) constitute a signal peptide (tat-type signal). The tract at residues 492–514 (VPDPQIMPTQETTPTRGIPSGPC) is disordered.

It belongs to the bacterial phospholipase C family. Predicted to be exported by the Tat system. The position of the signal peptide cleavage has not been experimentally proven.

It is found in the secreted. It localises to the cell wall. It carries out the reaction a 1,2-diacyl-sn-glycero-3-phosphocholine + H2O = phosphocholine + a 1,2-diacyl-sn-glycerol + H(+). Functionally, involved in virulence. Induces cytotoxic effects on mouse macrophage cell lines, via direct or indirect enzymatic hydrolysis of cell membrane phospholipids. Hydrolyzes phosphatidylcholine. The chain is Phospholipase C D from Mycobacterium tuberculosis (strain CDC 1551 / Oshkosh).